The sequence spans 625 residues: Prothrombin (625 aa).

An N-terminal signal peptide occupies residues 1-24; the sequence is MARVRGPRLPGCLALAALFSLVHS. A propeptide spanning residues 25–43 is cleaved from the precursor; that stretch reads QHVFLAHQQASSLLQRARR. The Gla domain maps to 44 to 90; the sequence is ANKGFLEEVRKGNLERECLEEPCSREEAFEALESLSATDAFWAKYTA. 10 positions are modified to 4-carboxyglutamate: E50, E51, E58, E60, E63, E64, E69, E70, E73, and E76. C61 and C66 are oxidised to a cystine. 11 cysteine pairs are disulfide-bonded: C91-C104, C109-C187, C130-C170, C158-C182, C214-C292, C235-C275, C263-C287, C339-C485, C394-C410, C539-C553, and C567-C597. Kringle domains lie at 109-187 and 214-292; these read CAEG…VPVC and CVPD…LNYC. N120 and N144 each carry an N-linked (GlcNAc...) asparagine glycan. One can recognise a Peptidase S1 domain in the interval 367–621; it reads IVEGQDAEVG…LKKWIQKVID (255 aa). H409 functions as the Charge relay system in the catalytic mechanism. A glycan (N-linked (GlcNAc...) asparagine) is linked at N419. D465 (charge relay system) is an active-site residue. The segment at 554 to 576 is high affinity receptor-binding region which is also known as the TP508 peptide; the sequence is AGYKPGEGKRGDACEGDSGGPFV. The active-site Charge relay system is the S571.

It belongs to the peptidase S1 family. As to quaternary structure, heterodimer (named alpha-thrombin) of a light and a heavy chain; disulfide-linked. Forms a heterodimer with SERPINA5. In plasma, interacts (via N-terminus) with alpha-1-microglobulin; this interaction does not prevent the activation of prothrombin to thrombin. In terms of processing, the gamma-carboxyglutamyl residues, which bind calcium ions, result from the carboxylation of glutamyl residues by a microsomal enzyme, the vitamin K-dependent carboxylase. The modified residues are necessary for the calcium-dependent interaction with a negatively charged phospholipid surface, which is essential for the conversion of prothrombin to thrombin. In the penultimate step of the coagulation cascade, prothrombin is converted to thrombin by the prothrombinase complex composed of factor Xa (F10), cofactor Va (F5), and phospholipids. This activation requires factor Xa-catalyzed sequential cleavage at 2 sites, Arg-317 and Arg-366, along 2 possible pathways. In the first pathway, the first cleavage occurs at Arg-317, leading to the formation of the inactive intermediate prethrombin-2. This pathway preferentially occurs on platelets and in the absence of cofactor Va. In the second pathway, the first cleavage occurs at Arg-366, which separates protease domain into 2 chains that remain connected through a disulfide bond and generates the active intermediate meizothrombin. The presence of cofactor Va directs activation along the meizothrombin pathway and greatly accelerates the rate of cleavage at Arg-366, but has a smaller effect on the cleavage of meizothrombin at Arg-317. Meizothrombin accumulates as an intermediate when prothrombinase is assembled on the membrane of red blood cells. Expressed by the liver and secreted in plasma.

It is found in the secreted. Its subcellular location is the extracellular space. The enzyme catalyses Selective cleavage of Arg-|-Gly bonds in fibrinogen to form fibrin and release fibrinopeptides A and B.. Activity is promoted in the presence of negatively charged surfaces, such as polyphosphate and dextran sulfate. Inhibited by SERPINA5. Functionally, thrombin, which cleaves bonds after Arg and Lys, converts fibrinogen to fibrin and activates factors V, VII, VIII, XIII, and, in complex with thrombomodulin, protein C. Functions in blood homeostasis, inflammation and wound healing. Activates coagulation factor XI (F11); activation is promoted by the contact with negatively charged surfaces. Triggers the production of pro-inflammatory cytokines, such as MCP-1/CCL2 and IL8/CXCL8, in endothelial cells. This chain is Prothrombin (F2), found in Bos taurus (Bovine).